We begin with the raw amino-acid sequence, 887 residues long: MIKHNLVSDLRRLFIDFFVKNGHQFFPSSQLVIKDDPSLLFTNAGMVQFKQRFTSVDDRSINTAVSSQKCLRVGGKHNDLENVGHTNRHHTFFEMLGNFSFGSYFKERAIELAWDFVTKELALDKKRLYITVYHDDQDAFNLWKKISSFSDDKIIKIKTNDNFWSMGNVGPCGPCSEIFYDYGESVKGGLPGTPEEDGARFTEIWNLVFMEYNRTEEGELSVLPRKCIDTGMGLERIAAVMQGVHDNYDINLFKALIAMSKKESGNSSCEIAHRVIADHVRSAAFLIAEGLTPGNEGRDYILRRIIRRAARYVYMLKYTDSLMYKIFPVLIDETSNAYMADYYPELFKAKDLIISILKTEEENFKDTLVRALPLLEKELTYLSTGDVLSGDIIFRLYDTYGFPVDITLDIIKERGIRFDEKGFYDNMEQQKTRSRLSHLIKSTEQLNGKIWEDIRQNYNNTRFVGYDNFQVQSKILSMVMNNDRNVTVANVGDKVSILMDITPFYAEAGGQQADTGLLSVVRRDGKDLFGSSNIADVTNTKNIFDGLYIHECIVKSGSLIIGDIVSAEINSHRRKDLCANHSATHLLHYILRMEIDNNIMQKGSLVGNDKLRFDFSYNMALTEKQIKLIENRMCDLIRQNHPVETNICNLQNAMDNGAIALFTEKYDNHEVRVVNIGNSKELCCGTHVKYTGEIGCFKIISESSIACGIRRIEAVTGQYAIDYFRQQEKVLYQVAESVKSPVEDVLVQIDKINRENQELKQKLWAAYFDIIDMQGVNIEKIGNINFLHGTLSSVPIDVVRKFIMKRLVKDMIMLFSNVVNHNKIYVVGVGNSLHSKVKAADFVKIIGCVVKSKGGGNAQLAQISTEYIAEVDVIQHIKDELVSIFNA.

Zn(2+) is bound by residues histidine 581, histidine 585, cysteine 683, and histidine 687.

This sequence belongs to the class-II aminoacyl-tRNA synthetase family. Requires Zn(2+) as cofactor.

It localises to the cytoplasm. The enzyme catalyses tRNA(Ala) + L-alanine + ATP = L-alanyl-tRNA(Ala) + AMP + diphosphate. In terms of biological role, catalyzes the attachment of alanine to tRNA(Ala) in a two-step reaction: alanine is first activated by ATP to form Ala-AMP and then transferred to the acceptor end of tRNA(Ala). Also edits incorrectly charged Ser-tRNA(Ala) and Gly-tRNA(Ala) via its editing domain. This is Alanine--tRNA ligase from Ehrlichia ruminantium (strain Welgevonden).